Here is a 590-residue protein sequence, read N- to C-terminus: Histone-binding protein N1/N2 (590 aa).

The segment at 1–30 (MAEETAALSTEKTEDTSTAPSTSAEKADGI) is disordered. Residues 36–69 (AKRLMGAGQKHLVMKDVRSAVNLFQEASSLLAKQ) form a TPR 1 repeat. A disordered region spans residues 102–328 (ALEGMPEDDE…EKETEEEDVG (227 aa)). Residues 106 to 120 (MPEDDEEEAEKEEDP) are compositionally biased toward acidic residues. Composition is skewed to basic and acidic residues over residues 128 to 250 (LDEK…DAKE) and 262 to 275 (AEEKMDSEASESKE). The span at 293–327 (EKMEEEEEGEDSEENEDGTEENEGTEEKETEEEDV) shows a compositional bias: acidic residues. 2 TPR repeats span residues 357–390 (AQAHQKLGEVCIESENYSQAVEDFLACLNIQKEH) and 399–432 (AETHYHLGLAYQYSSKHEEAISHFTQSIGVIEKR). Positions 492–590 (GGSSGFSKEN…METATVESTA (99 aa)) are disordered. Residues 496-525 (GFSKENGSTSSSSAVEKSGDSTVPVTNCVS) are compositionally biased toward polar residues. The Nuclear localization signal signature appears at 531 to 537 (VRKKRKT). The segment covering 536 to 553 (KTEEESPLKDKDAKKSKQ) has biased composition (basic and acidic residues).

This sequence belongs to the NASP family.

Its subcellular location is the nucleus. Its function is as follows. This protein is involved in nucleosome assembly. It is bound to H3 and H4 in the absence of DNA, but released from H3 and H4 in the presence of DNA. The protein is Histone-binding protein N1/N2 of Xenopus laevis (African clawed frog).